Reading from the N-terminus, the 381-residue chain is Bifunctional enzyme Fae/Hps (381 aa).

The interval 1–150 is formaldehyde-activating enzyme; that stretch reads MIKFGEAVLG…KEKYRALHPL (150 aa). The interval 151-381 is 3-hexulose-6-phosphate synthase; that stretch reads VGFRDVRLEY…DEDEDIGEEL (231 aa).

In the N-terminal section; belongs to the formaldehyde-activating enzyme family. The protein in the C-terminal section; belongs to the HPS/KGPDC family. HPS subfamily.

The catalysed reaction is 5,6,7,8-tetrahydromethanopterin + formaldehyde = 5,10-methylenetetrahydromethanopterin + H2O. The enzyme catalyses D-ribulose 5-phosphate + formaldehyde = D-arabino-hex-3-ulose 6-phosphate. The protein operates within carbohydrate biosynthesis; D-ribose 5-phosphate biosynthesis. Catalyzes the condensation of formaldehyde with tetrahydromethanopterin (H(4)MPT) to 5,10-methylenetetrahydromethanopterin. In terms of biological role, catalyzes the reversible formation of ribulose-5-phosphate and formaldehyde from 3-hexulose-6-phosphate. In Methanocaldococcus jannaschii (strain ATCC 43067 / DSM 2661 / JAL-1 / JCM 10045 / NBRC 100440) (Methanococcus jannaschii), this protein is Bifunctional enzyme Fae/Hps.